A 300-amino-acid chain; its full sequence is MVEIPAIDLRLAGGGGGAEETARLRDACARLGCFRVSGHGVPPGLQAEMKAAVRALFDLPDDAKRRNADIIPGSGYVPPGTANPLYEAFGLCDAAAPADVDAFCARLDAPPHVRETVKAYAERMHSLIVDVAGKVAASLGLHGASFQDWPCQFRMNRYNYTQDSVGSPGVQVHTDSGFLTVLQEDECVGGLEVLDPAAGEFVPVDPLPGSFVVNVGDVGQAWSNGRLHNVKHRVQCVAAVPRVSIAMFLLAPKDDTVSAPGELVDGEHPRRYREFKYDDYRRLRLSTGERAGEALARLAA.

The Fe2OG dioxygenase domain maps to 149–252 (WPCQFRMNRY…VSIAMFLLAP (104 aa)). Fe cation is bound by residues H173, D175, and H232. R242 lines the 2-oxoglutarate pocket.

It belongs to the iron/ascorbate-dependent oxidoreductase family. Fe(2+) is required as a cofactor.

In terms of biological role, 2-oxoglutarate-dependent dioxygenase essential for auxin catabolism and maintenance of auxin homeostasis in reproductive organs. Catalyzes the irreversible oxidation of indole-3-acetic acid (IAA) to the biologically inactive 2-oxoindole-3-acetic acid (OxIAA). The protein is 2-oxoglutarate-dependent dioxygenase DAO (DAO) of Oryza sativa subsp. indica (Rice).